Reading from the N-terminus, the 303-residue chain is Uricase (303 aa).

A2 carries the N-acetylalanine modification. An N6-acetyllysine; alternate mark is found at K10 and K23. Residues K10 and K23 each carry the N6-succinyllysine; alternate modification. The active-site Charge relay system is K23. 2 positions are modified to N6-acetyllysine: K27 and K36. Phosphoserine occurs at positions 39 and 63. Residue T68 is the Charge relay system of the active site. Urate-binding residues include T68 and D69. N6-acetyllysine occurs at positions 118, 122, and 164. Urate is bound at residue F170. N6-acetyllysine is present on residues K175 and K185. R187 provides a ligand contact to urate. An N6-acetyllysine; alternate modification is found at K220. K220 bears the N6-succinyllysine; alternate mark. S231 is subject to Phosphoserine. Urate-binding residues include V234, Q235, and N261. H263 serves as the catalytic Charge relay system. K277 is subject to N6-acetyllysine. At Y288 the chain carries Phosphotyrosine. The Microbody targeting signal signature appears at 301 to 303 (SRL).

It belongs to the uricase family. As to expression, expressed in liver. Not detected in other tissues tested.

The protein localises to the peroxisome. The catalysed reaction is urate + O2 + H2O = 5-hydroxyisourate + H2O2. It functions in the pathway purine metabolism; urate degradation; (S)-allantoin from urate: step 1/3. With respect to regulation, competitively inhibited by xanthine. Its function is as follows. Catalyzes the oxidation of uric acid to 5-hydroxyisourate, which is further processed to form (S)-allantoin. In Rattus norvegicus (Rat), this protein is Uricase (Uox).